The primary structure comprises 117 residues: Non-specific lipid-transfer protein 2 (117 aa).

Residues 1–25 (MAGLMKLACLVLACMIVAGPITSNA) form the signal peptide. 4 cysteine pairs are disulfide-bonded: Cys29/Cys76, Cys39/Cys53, Cys54/Cys99, and Cys74/Cys113.

Belongs to the plant LTP family.

Its function is as follows. Plant non-specific lipid-transfer proteins transfer phospholipids as well as galactolipids across membranes. May play a role in wax or cutin deposition in the cell walls of expanding epidermal cells and certain secretory tissues. This is Non-specific lipid-transfer protein 2 (LTP2) from Brassica napus (Rape).